The chain runs to 436 residues: Protein PhoH2 (436 aa).

The 126-residue stretch at 12–137 folds into the PINc domain; the sequence is RTYVLDTSVL…LVSKDLPMRL (126 aa).

In the N-terminal section; belongs to the PINc/VapC protein family. This sequence in the C-terminal section; belongs to the PhoH family.

The enzyme catalyses n ATP + n H2O + wound RNA = n ADP + n phosphate + unwound RNA.. It catalyses the reaction ATP + H2O = ADP + phosphate + H(+). The catalysed reaction is GTP + H2O = GDP + phosphate + H(+). Functionally, unwinds and/or cleaves 5'-tailed RNA in vitro, the reaction is maximal with hydrolyzable ATP; double-stranded (ds)RNA and dsDNA are not unwound. Unlike the protein in mycobacteria there does not seem to be an antitoxin gene upstream, suggesting this is not a toxin-antitoxin system. Has ATPase and GTPase activities. This Thermobispora bispora (strain ATCC 19993 / DSM 43833 / CBS 139.67 / JCM 10125 / KCTC 9307 / NBRC 14880 / R51) protein is Protein PhoH2.